The primary structure comprises 403 residues: Non-structural maintenance of chromosomes element 4 homolog A (403 aa).

Residues 1–45 (MRKTVKRESEATGGKREADDEPEKLRSVKKEKQRKTEADSVRPDE) are compositionally biased toward basic and acidic residues. Disordered stretches follow at residues 1–57 (MRKT…QGIS), 194–226 (LKQRKRAPNRKRTKPGEGVRPDEVDDSQSEEKT), and 342–403 (SSCP…LTSS). Over residues 196–206 (QRKRAPNRKRT) the composition is skewed to basic residues. A compositionally biased stretch (low complexity) spans 342-353 (SSCPAASAPASA). The segment covering 354–363 (DFTQDTQTTP) has biased composition (polar residues). A compositionally biased stretch (basic and acidic residues) spans 384–393 (TPDKEGDGTR). A compositionally biased stretch (basic residues) spans 394–403 (RRCKRRLTSS).

It belongs to the NSE4 family. Interacts with SMC5, SMC6A or SMC6B. The SMC5-SMC6 complex is composed of the SMC5 and SMC6 heterodimer attached via their hinge domain and from the non-SMC subunit NSE4A or NSE4B. Expressed in seedlings, rosette leaves and floral buds.

It localises to the nucleus. Functionally, component of the SMC5-SMC6 complex, that promotes sister chromatid alignment after DNA damage and facilitates double-stranded DNA breaks (DSBs) repair via homologous recombination between sister chromatids. The protein is Non-structural maintenance of chromosomes element 4 homolog A (NSE4A) of Arabidopsis thaliana (Mouse-ear cress).